The following is a 710-amino-acid chain: DNA-directed RNA polymerase III subunit RPC5 (710 aa).

The segment covering 146–155 has biased composition (basic and acidic residues); sequence DAKHREREAA. A disordered region spans residues 146-169; the sequence is DAKHREREAANEAGDSSQDEAEED. Residues S161 and S162 each carry the phosphoserine modification. K171 is covalently cross-linked (Glycyl lysine isopeptide (Lys-Gly) (interchain with G-Cter in SUMO2)). A Phosphoserine modification is found at S192. Y224 carries the phosphotyrosine modification. K432 is covalently cross-linked (Glycyl lysine isopeptide (Lys-Gly) (interchain with G-Cter in SUMO2)). A Glycyl lysine isopeptide (Lys-Gly) (interchain with G-Cter in SUMO1); alternate cross-link involves residue K498. K498 participates in a covalent cross-link: Glycyl lysine isopeptide (Lys-Gly) (interchain with G-Cter in SUMO2); alternate. The segment at 498-526 is disordered; the sequence is KEEPLSEEEADGAELEAEEEEPMDTAPST. Positions 502–520 are enriched in acidic residues; it reads LSEEEADGAELEAEEEEPM. Position 503 is a phosphoserine (S503). Residues 558-710 are required for Pol III complex stability; the sequence is NPVACELKAF…MWYLKGTVQS (153 aa). Residue K661 forms a Glycyl lysine isopeptide (Lys-Gly) (interchain with G-Cter in SUMO2) linkage.

Component of the RNA polymerase III complex consisting of at least 17 subunits: a ten-subunit horseshoe-shaped catalytic core composed of POLR3A/RPC1, POLR3B/RPC2, POLR1C/RPAC1, POLR1D/RPAC2, POLR3K/RPC10, POLR2E/RPABC1, POLR2F/RPABC2, POLR2H/RPABC3, POLR2K/RPABC4 and POLR2L/RPABC5; the stalk composed of two subunits POLR3H/RPC8 and CRCP/RPC9, forming a structural mobile part that protrudes out of the core and functions primarily in transcription initiation; and additional subunits homologous to general transcription factors of the RNA polymerase II machinery, POLR3D/RPC4-POLR3E/RPC5 heterodimer and POLR3/CRPC3-POLR3F/RPC6-POLR3G/RPC7 heterotrimer.

The protein resides in the nucleus. DNA-dependent RNA polymerase catalyzes the transcription of DNA into RNA using the four ribonucleoside triphosphates as substrates. Specific peripheric component of RNA polymerase III (Pol III) which synthesizes small non-coding RNAs including 5S rRNA, snRNAs, tRNAs and miRNAs from at least 500 distinct genomic loci. Assembles with POLR3D/RPC4 forming a subcomplex that binds the Pol III core. Enables recruitment of Pol III at transcription initiation site and drives transcription initiation from both type 2 and type 3 DNA promoters. Required for efficient transcription termination and reinitiation. Plays a key role in sensing and limiting infection by intracellular bacteria and DNA viruses. Acts as a nuclear and cytosolic DNA sensor involved in innate immune response. Can sense non-self dsDNA that serves as template for transcription into dsRNA. The non-self RNA polymerase III transcripts, such as Epstein-Barr virus-encoded RNAs (EBERs) induce type I interferon and NF-kappa-B through the RIG-I pathway. The protein is DNA-directed RNA polymerase III subunit RPC5 of Mus musculus (Mouse).